The sequence spans 802 residues: Vacuolar membrane protease (802 aa).

Topologically, residues 1-13 are cytoplasmic; sequence MARYNPLAFTSGP. A helical membrane pass occupies residues 14-34; it reads VVFFITITYTALLIALLLTHL. Residues 35 to 357 are Vacuolar-facing; the sequence is TLPSYPSHPP…KVFIVFQLHT (323 aa). N-linked (GlcNAc...) asparagine glycosylation is found at Asn-48, Asn-102, Asn-105, and Asn-112. Residues His-152 and Asp-164 each coordinate Zn(2+). The Proton acceptor role is filled by Glu-198. Zn(2+)-binding residues include Glu-199, Glu-224, and His-297. The helical transmembrane segment at 358–378 threads the bilayer; it reads FFALCVTLLVVAPLTLIGLAW. The Cytoplasmic segment spans residues 379–389; the sequence is SLHKADRNYLF. The helical transmembrane segment at 390–409 threads the bilayer; it reads ARKAFVYSADDDEPIHLYGW. At 410–423 the chain is on the vacuolar side; that stretch reads RGFFRFPIAFGIAT. The helical transmembrane segment at 424–444 threads the bilayer; sequence SIVVGLAMMLSAWFAVSWFLL. Topologically, residues 445–457 are cytoplasmic; that stretch reads HGADAMRPSALQR. A helical membrane pass occupies residues 458 to 478; that stretch reads MYSLLWLFIGSFCLLVFFTIL. Residues 479-490 lie on the Vacuolar side of the membrane; it reads ANNHQVAAGYPS. Residues 491–511 form a helical membrane-spanning segment; that stretch reads LFCFATVFLANVLSFLELFLA. The Cytoplasmic segment spans residues 512-609; it reads PPKSAYAWNV…EQEWSGKLPS (98 aa). Disordered regions lie at residues 528–554 and 570–603; these read GSRP…ATET and AGRR…EQEW. A helical membrane pass occupies residues 610 to 630; the sequence is WIWIVQFSLLAPMIVILVGQI. Residues 631–649 are Vacuolar-facing; the sequence is ALLLTSALYQTPSDGNSPL. Residues 650-670 form a helical membrane-spanning segment; the sequence is YIYTSIAALAVFLVAPIGPFI. Residues 671-677 are Cytoplasmic-facing; that stretch reads HRFTHHV. The helical transmembrane segment at 678–698 threads the bilayer; it reads PTFLFLLCVATTIYNLVAFPF. At 699-802 the chain is on the vacuolar side; that stretch reads SEQHKLKVYF…HDDSNNRGRR (104 aa). Asn-746 and Asn-779 each carry an N-linked (GlcNAc...) asparagine glycan.

Belongs to the peptidase M28 family. Zn(2+) is required as a cofactor.

The protein resides in the vacuole membrane. Its function is as follows. May be involved in vacuolar sorting and osmoregulation. This is Vacuolar membrane protease from Leptosphaeria maculans (strain JN3 / isolate v23.1.3 / race Av1-4-5-6-7-8) (Blackleg fungus).